The chain runs to 299 residues: Glycine--tRNA ligase alpha subunit (299 aa).

The protein belongs to the class-II aminoacyl-tRNA synthetase family. In terms of assembly, tetramer of two alpha and two beta subunits.

The protein resides in the cytoplasm. The catalysed reaction is tRNA(Gly) + glycine + ATP = glycyl-tRNA(Gly) + AMP + diphosphate. In Dictyoglomus turgidum (strain DSM 6724 / Z-1310), this protein is Glycine--tRNA ligase alpha subunit.